Reading from the N-terminus, the 134-residue chain is MSPFFMMSLLFGLTFGQTASVCAPSEYTIHVEKRECAYCLAINTTICAGFCMTRDSNGKKLLLKSALSQNVCTYKEMFYQTALIPGCPHHTIPYYSYPVAISCKCGKCNTDYSDCVHEKVRTNYCTKPQKLCNM.

The signal sequence occupies residues 1–16 (MSPFFMMSLLFGLTFG). 6 cysteine pairs are disulfide-bonded: C22/C72, C36/C87, C39/C125, C47/C103, C51/C105, and C108/C115. Residue N43 is glycosylated (N-linked (GlcNAc...) asparagine).

Belongs to the glycoprotein hormones subunit beta family. Heterodimer of a common alpha chain and a unique beta chain which confers biological specificity to thyrotropin, lutropin, follitropin and gonadotropin.

Its subcellular location is the secreted. Its function is as follows. Indispensable for the control of thyroid structure and metabolism. This Gallus gallus (Chicken) protein is Thyrotropin subunit beta (TSHB).